The following is a 398-amino-acid chain: MRKRTEPVTLEHERCAASGSSSSGSAAAALDADCSLKQNLRLAGKGTAEPHSASDAGMKRALGRRKSLWFRLRKILLCVLGFYIAIPFLVKLCPGIQAKLIFLNFVRVPYFIDLKKPQDQGLNHTCNYYLQPEDDVTIGVWHTIPSVWWKNAQGKDQMWYEDALASNHPIILYLHGNAGTRGGDHRVELYKVLSSLGYHVVTFDYRGWGDSVGTPSERGMTYDALHVFDWIKARSGDNPVYIWGHSLGTGVATNLVRRLCERETPPDALILESPFTNIREEAKSHPFSVIYRYFPGFDWFFLDPITSSGIKFANDENMKHISCPLLILHAEDDPVVPFHLGRKLYNIAAPSRSFRDFKVQFIPFHSDLGYRHKYIYKSPELPRILREFLGKSEPERQH.

Over residues 1–15 (MRKRTEPVTLEHERC) the composition is skewed to basic and acidic residues. The interval 1 to 24 (MRKRTEPVTLEHERCAASGSSSSG) is disordered. At 1–74 (MRKRTEPVTL…RKSLWFRLRK (74 aa)) the chain is on the cytoplasmic side. A helical transmembrane segment spans residues 75–95 (ILLCVLGFYIAIPFLVKLCPG). Residues 96 to 398 (IQAKLIFLNF…LGKSEPERQH (303 aa)) lie on the Extracellular side of the membrane. N-linked (GlcNAc...) asparagine glycosylation is present at Asn123. The Nucleophile role is filled by Ser246. Active-site charge relay system residues include Asp333 and His372.

The protein belongs to the serine esterase family.

It localises to the endoplasmic reticulum membrane. The enzyme catalyses 1-(9Z-octadecenoyl)-sn-glycero-3-phospho-L-serine + H2O = sn-glycero-3-phospho-L-serine + (9Z)-octadecenoate + H(+). The catalysed reaction is 1-(9Z-octadecenoyl)-sn-glycero-3-phospho-(1'-sn-glycerol) + H2O = sn-glycero-3-phospho-(1'-sn-glycerol) + (9Z)-octadecenoate + H(+). It carries out the reaction 1-(9Z-octadecenoyl)-sn-glycero-3-phospho-(1D-myo-inositol) + H2O = sn-glycero-3-phospho-1D-myo-inositol + (9Z)-octadecenoate + H(+). It catalyses the reaction 1-(9Z-octadecenoyl)-sn-glycero-3-phosphoethanolamine + H2O = sn-glycero-3-phosphoethanolamine + (9Z)-octadecenoate + H(+). The enzyme catalyses 1-(9Z-octadecenoyl)-sn-glycero-3-phosphocholine + H2O = 1-(9Z-octadecenoyl)-sn-glycerol + phosphocholine + H(+). The catalysed reaction is 2-(9Z-octadecenoyl)-glycerol + H2O = glycerol + (9Z)-octadecenoate + H(+). It carries out the reaction 1-hexadecanoyl-sn-glycero-3-phospho-L-serine + H2O = sn-glycero-3-phospho-L-serine + hexadecanoate + H(+). It catalyses the reaction 2-(5Z,8Z,11Z,14Z-eicosatetraenoyl)-glycerol + H2O = glycerol + (5Z,8Z,11Z,14Z)-eicosatetraenoate + H(+). The enzyme catalyses Hydrolyzes glycerol monoesters of long-chain fatty acids.. The catalysed reaction is 1-decanoylglycerol + H2O = decanoate + glycerol + H(+). It carries out the reaction 1-dodecanoylglycerol + H2O = dodecanoate + glycerol + H(+). It catalyses the reaction 1-tetradecanoylglycerol + H2O = tetradecanoate + glycerol + H(+). The enzyme catalyses 2-hexadecanoylglycerol + H2O = glycerol + hexadecanoate + H(+). The catalysed reaction is 1-(9Z-octadecenoyl)-glycerol + H2O = glycerol + (9Z)-octadecenoate + H(+). It carries out the reaction 2-(9Z,12Z-octadecadienoyl)-glycerol + H2O = (9Z,12Z)-octadecadienoate + glycerol + H(+). It catalyses the reaction 1-(5Z,8Z,11Z,14Z-eicosatetraenoyl)-glycerol + H2O = glycerol + (5Z,8Z,11Z,14Z)-eicosatetraenoate + H(+). The enzyme catalyses 1-(9Z,12Z-octadecadienoyl)-glycerol + H2O = (9Z,12Z)-octadecadienoate + glycerol + H(+). The catalysed reaction is 1-hexadecanoylglycerol + H2O = glycerol + hexadecanoate + H(+). It carries out the reaction 1-octadecanoylglycerol + H2O = octadecanoate + glycerol + H(+). It catalyses the reaction 1-octadecanoyl-2-(9,10-epoxyoctadecanoyl)-sn-glycero-3-phospho-L-serine + H2O = 9,10-epoxyoctadecanoate + 1-octadecanoyl-sn-glycero-3-phosphoserine + H(+). The enzyme catalyses 1-octadecanoyl-2-(10-hydroxyoctadecanoyl)-sn-glycero-3-phospho-L-serine + H2O = 1-octadecanoyl-sn-glycero-3-phosphoserine + 10-hydroxyoctadecanoate + H(+). The catalysed reaction is 1-hexadecanoyl-2-(10-hydroxyoctadecanoyl)-sn-glycero-3-phospho-L-serine + H2O = 10-hydroxyoctadecanoate + 1-hexadecanoyl-sn-glycero-3-phospho-L-serine + H(+). Its function is as follows. Lysophosphatidylserine (LPS) lipase that mediates the hydrolysis of lysophosphatidylserine, a class of signaling lipids that regulates immunological and neurological processes. Represents a major lysophosphatidylserine lipase in the brain, thereby playing a key role in the central nervous system. Also able to hydrolyze oxidized phosphatidylserine; oxidized phosphatidylserine is produced in response to severe inflammatory stress and constitutes a proapoptotic 'eat me' signal. Also has monoacylglycerol (MAG) lipase activity: hydrolyzes 2-arachidonoylglycerol (2-AG), thereby acting as a regulator of endocannabinoid signaling pathways. Has a strong preference for very-long-chain lipid substrates; substrate specificity is likely due to improved catalysis and not improved substrate binding. This is Lysophosphatidylserine lipase ABHD12 from Rattus norvegicus (Rat).